Reading from the N-terminus, the 211-residue chain is Ribosomal RNA small subunit methyltransferase G (211 aa).

S-adenosyl-L-methionine contacts are provided by residues G73, 126-127 (IE), and R142.

This sequence belongs to the methyltransferase superfamily. RNA methyltransferase RsmG family.

It localises to the cytoplasm. It catalyses the reaction guanosine(527) in 16S rRNA + S-adenosyl-L-methionine = N(7)-methylguanosine(527) in 16S rRNA + S-adenosyl-L-homocysteine. Its function is as follows. Specifically methylates the N7 position of guanine in position 527 of 16S rRNA. This is Ribosomal RNA small subunit methyltransferase G from Methylorubrum extorquens (strain CM4 / NCIMB 13688) (Methylobacterium extorquens).